The sequence spans 734 residues: Photosystem I P700 chlorophyll a apoprotein A2 (734 aa).

8 consecutive transmembrane segments (helical) span residues 46 to 69 (IFASHFGQLAIIFLWTSGNLFHVA), 135 to 158 (LYTASVFLSLMAGVFLFAGWLHLQ), 175 to 199 (LNHHLSGLFGVSSLAWTGHLVHVAI), 273 to 291 (IAHHHLAIAVVFIIAGHQY), 330 to 353 (LHFQLGLALASVGTICSMVAQHIY), 369 to 395 (AALYTHHQYIAGFIMCGAFAHGAIFFI), 417 to 439 (AIISHLSWVSLFLGFHTLGLYVH), and 517 to 535 (FLVHHAIALGLHTTTLILV). Residues Cys-559 and Cys-568 each coordinate [4Fe-4S] cluster. The next 2 membrane-spanning stretches (helical) occupy residues 575–596 (AFYLAVFWMLNTIGWVTFYFHW) and 643–665 (LGVWSWAFLLAHLIYATGFMFLI). His-654, Met-662, and Tyr-670 together coordinate chlorophyll a. Phylloquinone is bound at residue Trp-671. The chain crosses the membrane as a helical span at residues 707–727 (LVGLVHFSVGYVLTYGSFLIA).

The protein belongs to the PsaA/PsaB family. As to quaternary structure, the PsaA/B heterodimer binds the P700 chlorophyll special pair and subsequent electron acceptors. PSI consists of a core antenna complex that captures photons, and an electron transfer chain that converts photonic excitation into a charge separation. The eukaryotic PSI reaction center is composed of at least 11 subunits. Requires P700 is a chlorophyll a/chlorophyll a' dimer, A0 is one or more chlorophyll a, A1 is one or both phylloquinones and FX is a shared 4Fe-4S iron-sulfur center. as cofactor.

The protein localises to the plastid. It localises to the chloroplast thylakoid membrane. The catalysed reaction is reduced [plastocyanin] + hnu + oxidized [2Fe-2S]-[ferredoxin] = oxidized [plastocyanin] + reduced [2Fe-2S]-[ferredoxin]. Functionally, psaA and PsaB bind P700, the primary electron donor of photosystem I (PSI), as well as the electron acceptors A0, A1 and FX. PSI is a plastocyanin/cytochrome c6-ferredoxin oxidoreductase, converting photonic excitation into a charge separation, which transfers an electron from the donor P700 chlorophyll pair to the spectroscopically characterized acceptors A0, A1, FX, FA and FB in turn. Oxidized P700 is reduced on the lumenal side of the thylakoid membrane by plastocyanin or cytochrome c6. The polypeptide is Photosystem I P700 chlorophyll a apoprotein A2 (Oltmannsiellopsis viridis (Marine flagellate)).